The primary structure comprises 464 residues: tRNA(Ile2) 2-agmatinylcytidine synthetase TiaS (464 aa).

This sequence belongs to the TiaS family.

Its subcellular location is the cytoplasm. The catalysed reaction is cytidine(34) in tRNA(Ile2) + agmatine + ATP + H2O = 2-agmatinylcytidine(34) in tRNA(Ile2) + AMP + 2 phosphate + 2 H(+). Functionally, ATP-dependent agmatine transferase that catalyzes the formation of 2-agmatinylcytidine (agm2C) at the wobble position (C34) of tRNA(Ile2), converting the codon specificity from AUG to AUA. This chain is tRNA(Ile2) 2-agmatinylcytidine synthetase TiaS, found in Ignisphaera aggregans (strain DSM 17230 / JCM 13409 / AQ1.S1).